A 334-amino-acid chain; its full sequence is D-fructose 1,6-bisphosphatase class 2/sedoheptulose 1,7-bisphosphatase (334 aa).

The Mn(2+) site is built by Asp33, Glu57, Asp85, and Glu88. Substrate-binding positions include 88 to 90 (EGT), Tyr119, 164 to 166 (RAR), and 186 to 188 (DGD). Glu213 contributes to the Mn(2+) binding site.

Belongs to the FBPase class 2 family. In terms of assembly, homotetramer. Requires Mn(2+) as cofactor.

It catalyses the reaction beta-D-fructose 1,6-bisphosphate + H2O = beta-D-fructose 6-phosphate + phosphate. The enzyme catalyses D-sedoheptulose 1,7-bisphosphate + H2O = D-sedoheptulose 7-phosphate + phosphate. Its pathway is carbohydrate biosynthesis; Calvin cycle. Functionally, catalyzes the hydrolysis of fructose 1,6-bisphosphate (Fru 1,6-P2) and sedoheptulose 1,7-bisphosphate (Sed 1,7-P2) to fructose 6-phosphate and sedoheptulose 7-phosphate, respectively. The chain is D-fructose 1,6-bisphosphatase class 2/sedoheptulose 1,7-bisphosphatase from Synechococcus sp. (strain RCC307).